The primary structure comprises 159 residues: SsrA-binding protein (159 aa).

This sequence belongs to the SmpB family.

The protein resides in the cytoplasm. Functionally, required for rescue of stalled ribosomes mediated by trans-translation. Binds to transfer-messenger RNA (tmRNA), required for stable association of tmRNA with ribosomes. tmRNA and SmpB together mimic tRNA shape, replacing the anticodon stem-loop with SmpB. tmRNA is encoded by the ssrA gene; the 2 termini fold to resemble tRNA(Ala) and it encodes a 'tag peptide', a short internal open reading frame. During trans-translation Ala-aminoacylated tmRNA acts like a tRNA, entering the A-site of stalled ribosomes, displacing the stalled mRNA. The ribosome then switches to translate the ORF on the tmRNA; the nascent peptide is terminated with the 'tag peptide' encoded by the tmRNA and targeted for degradation. The ribosome is freed to recommence translation, which seems to be the essential function of trans-translation. This is SsrA-binding protein from Bifidobacterium adolescentis (strain ATCC 15703 / DSM 20083 / NCTC 11814 / E194a).